The primary structure comprises 496 residues: Glutamyl-tRNA(Gln) amidotransferase subunit A (496 aa).

Residues lysine 75 and serine 150 each act as charge relay system in the active site. Serine 174 acts as the Acyl-ester intermediate in catalysis.

The protein belongs to the amidase family. GatA subfamily. Heterotrimer of A, B and C subunits.

The catalysed reaction is L-glutamyl-tRNA(Gln) + L-glutamine + ATP + H2O = L-glutaminyl-tRNA(Gln) + L-glutamate + ADP + phosphate + H(+). In terms of biological role, allows the formation of correctly charged Gln-tRNA(Gln) through the transamidation of misacylated Glu-tRNA(Gln) in organisms which lack glutaminyl-tRNA synthetase. The reaction takes place in the presence of glutamine and ATP through an activated gamma-phospho-Glu-tRNA(Gln). The sequence is that of Glutamyl-tRNA(Gln) amidotransferase subunit A from Burkholderia ambifaria (strain ATCC BAA-244 / DSM 16087 / CCUG 44356 / LMG 19182 / AMMD) (Burkholderia cepacia (strain AMMD)).